The primary structure comprises 495 residues: Cobyric acid synthase (495 aa).

In terms of domain architecture, GATase cobBQ-type spans 250 to 444 (SLKISILRLP…LHGLFDNGAW (195 aa)). The Nucleophile role is filled by Cys-331. Residue His-436 is part of the active site.

It belongs to the CobB/CobQ family. CobQ subfamily.

Its pathway is cofactor biosynthesis; adenosylcobalamin biosynthesis. Catalyzes amidations at positions B, D, E, and G on adenosylcobyrinic A,C-diamide. NH(2) groups are provided by glutamine, and one molecule of ATP is hydrogenolyzed for each amidation. This is Cobyric acid synthase from Rippkaea orientalis (strain PCC 8801 / RF-1) (Cyanothece sp. (strain PCC 8801)).